A 425-amino-acid chain; its full sequence is Riboflavin biosynthesis protein RibBA (425 aa).

The DHBP synthase stretch occupies residues 1 to 204 (MTRLDSVERA…IADLIEWRRK (204 aa)). D-ribulose 5-phosphate is bound by residues 28–29 (RE), Asp33, 141–145 (RPGHT), and Glu165. Glu29 contributes to the Mg(2+) binding site. His144 is a binding site for Mg(2+). The segment at 205–425 (HEKHIERVAE…HLPGEFGGAL (221 aa)) is GTP cyclohydrolase II. 259–263 (RVHSE) serves as a coordination point for GTP. Residues Cys264, Cys275, and Cys277 each coordinate Zn(2+). Residues Gln280, 303 to 305 (EGR), and Thr325 contribute to the GTP site. Asp337 functions as the Proton acceptor; for GTP cyclohydrolase activity in the catalytic mechanism. The active-site Nucleophile; for GTP cyclohydrolase activity is Arg339. Thr360 and Lys365 together coordinate GTP.

This sequence in the N-terminal section; belongs to the DHBP synthase family. It in the C-terminal section; belongs to the GTP cyclohydrolase II family. Requires Mg(2+) as cofactor. Mn(2+) serves as cofactor. The cofactor is Zn(2+).

It catalyses the reaction D-ribulose 5-phosphate = (2S)-2-hydroxy-3-oxobutyl phosphate + formate + H(+). The enzyme catalyses GTP + 4 H2O = 2,5-diamino-6-hydroxy-4-(5-phosphoribosylamino)-pyrimidine + formate + 2 phosphate + 3 H(+). It functions in the pathway cofactor biosynthesis; riboflavin biosynthesis; 2-hydroxy-3-oxobutyl phosphate from D-ribulose 5-phosphate: step 1/1. The protein operates within cofactor biosynthesis; riboflavin biosynthesis; 5-amino-6-(D-ribitylamino)uracil from GTP: step 1/4. Its function is as follows. Catalyzes the conversion of D-ribulose 5-phosphate to formate and 3,4-dihydroxy-2-butanone 4-phosphate. Functionally, catalyzes the conversion of GTP to 2,5-diamino-6-ribosylamino-4(3H)-pyrimidinone 5'-phosphate (DARP), formate and pyrophosphate. The chain is Riboflavin biosynthesis protein RibBA from Mycobacterium ulcerans (strain Agy99).